Consider the following 239-residue polypeptide: MGRMLTIRVFKYDPQSAVSKPHFQEYKIEEAPSMTIFIVLNMIRETYDPDLNFDFVCRAGICGSCGMMINGRPSLACRTLTKDFEDGVITLLPLPAFKLIKDLSVDTGNWFNGMSQRVESWIHAQKEHDISKLEERIEPEVAQEVFELDRCIECGCCIAACGTKIMREDFVGAAGLNRVVRFMIDPHDERTDEDYYELIGDDDGVFGCMTLLACHDVCPKNLPLQSKIAYLRRKMVSVN.

Positions 5 to 95 (LTIRVFKYDP…DGVITLLPLP (91 aa)) constitute a 2Fe-2S ferredoxin-type domain. 4 residues coordinate [2Fe-2S] cluster: C57, C62, C65, and C77. The region spanning 142–171 (AQEVFELDRCIECGCCIAACGTKIMREDFV) is the 4Fe-4S ferredoxin-type domain. Positions 151, 154, and 157 each coordinate [4Fe-4S] cluster. 3 residues coordinate [3Fe-4S] cluster: C161, C208, and C214. C218 serves as a coordination point for [4Fe-4S] cluster.

It belongs to the succinate dehydrogenase/fumarate reductase iron-sulfur protein family. Part of an enzyme complex containing three subunits: a flavoprotein (frdA), an iron-sulfur protein (frdB), and diheme cytochrome b (frdC). It depends on [2Fe-2S] cluster as a cofactor. The cofactor is [3Fe-4S] cluster. [4Fe-4S] cluster is required as a cofactor.

Its subcellular location is the cell inner membrane. The catalysed reaction is a menaquinone + succinate = a menaquinol + fumarate. Its function is as follows. The fumarate reductase enzyme complex is required for fumarate respiration using formate or sulfide as electron donor. The chain is Fumarate reductase iron-sulfur subunit (frdB) from Wolinella succinogenes (strain ATCC 29543 / DSM 1740 / CCUG 13145 / JCM 31913 / LMG 7466 / NCTC 11488 / FDC 602W) (Vibrio succinogenes).